Consider the following 253-residue polypeptide: 5-oxoprolinase subunit A (253 aa).

This sequence belongs to the LamB/PxpA family. In terms of assembly, forms a complex composed of PxpA, PxpB and PxpC.

The enzyme catalyses 5-oxo-L-proline + ATP + 2 H2O = L-glutamate + ADP + phosphate + H(+). In terms of biological role, catalyzes the cleavage of 5-oxoproline to form L-glutamate coupled to the hydrolysis of ATP to ADP and inorganic phosphate. This is 5-oxoprolinase subunit A from Bacillus cereus (strain ATCC 14579 / DSM 31 / CCUG 7414 / JCM 2152 / NBRC 15305 / NCIMB 9373 / NCTC 2599 / NRRL B-3711).